The following is a 434-amino-acid chain: MDYTKITRYTTGIDSILYKLIENCIDLRPTTYRLKILLHKAIELRNIEAVRLLLNNDVDPVAIDTHGITSLHTLTMPPNSSFIELDNWCSNTYTELLEVINRLNKSKTSYSFQRVELMRMIMDYCKDDEISKCLTISRMEPSRQIEEIQIMDILLSKGIDINFKDDIGNTALHYACDYRNGLNMVRHLIKNGADINIENDYGTTPLACAVSTRNIELVSILLDSGADPNSSSSSSIGTKVLHTAVGSGNFNIAKELIESGADPNIGDKAGVTPLHVAAIDEDSYALLELLLDNGADPNIKCSNGTTPLFQAMHNYNRVKLLFMYGADINIIDNQGNTPFTNLMSYDNEKLNSIIILQIMLIRKLFNDKMYYPAGLIKNLECIESHENLMNMAKRCEKLIKNKKSKDIVPDRISSELLDEEYDLDGWRSTSCSIS.

ANK repeat units follow at residues 33–62 (RLKILLHKAIELRNIEAVRLLLNNDVDPVA), 134–163 (LTISRMEPSRQIEEIQIMDILLSKGIDINF), 167–197 (IGNTALHYACDYRNGLNMVRHLIKNGADINI), 201–230 (YGTTPLACAVSTRNIELVSILLDSGADPNS), 236–265 (IGTKVLHTAVGSGNFNIAKELIESGADPNI), 269–299 (AGVTPLHVAAIDEDSYALLELLLDNGADPNI), and 303–330 (NGTTPLFQAMHNYNRVKLLFMYGADINI).

This chain is Putative ankyrin repeat protein FPV023, found in Fowlpox virus (strain NVSL) (FPV).